The following is a 562-amino-acid chain: AT-rich interactive domain-containing protein 1 (562 aa).

The 94-residue stretch at 43–136 (KELISLFRPL…YLDAFGRWLN (94 aa)) folds into the ARID domain. Residues 358–448 (PCALVGSKFQ…KLELGPAFYM (91 aa)) enclose the ELM2 domain.

It localises to the nucleus. This Arabidopsis thaliana (Mouse-ear cress) protein is AT-rich interactive domain-containing protein 1 (ARID1).